The primary structure comprises 122 residues: Large ribosomal subunit protein uL14 (122 aa).

This sequence belongs to the universal ribosomal protein uL14 family. In terms of assembly, part of the 50S ribosomal subunit. Forms a cluster with proteins L3 and L19. In the 70S ribosome, L14 and L19 interact and together make contacts with the 16S rRNA in bridges B5 and B8.

Binds to 23S rRNA. Forms part of two intersubunit bridges in the 70S ribosome. The chain is Large ribosomal subunit protein uL14 from Chloroherpeton thalassium (strain ATCC 35110 / GB-78).